A 37-amino-acid polypeptide reads, in one-letter code: U4-theraphotoxin-Hhn1v (37 aa).

Intrachain disulfides connect C3–C17, C7–C28, and C22–C33.

The protein belongs to the neurotoxin 12 (Hwtx-2) family. 02 (Hwtx-2) subfamily. As to expression, expressed by the venom gland.

It is found in the secreted. In terms of biological role, postsynaptic neurotoxin. The polypeptide is U4-theraphotoxin-Hhn1v (Cyriopagopus hainanus (Chinese bird spider)).